A 167-amino-acid polypeptide reads, in one-letter code: Probable membrane-bound hydrogenase subunit mbhJ (167 aa).

Cysteine 35, cysteine 38, cysteine 102, and cysteine 132 together coordinate [4Fe-4S] cluster.

The protein belongs to the complex I 20 kDa subunit family. In terms of assembly, the membrane-bound hydrogenase complex is composed of MbhK and MbhL, but may also contain MbhJ. [4Fe-4S] cluster serves as cofactor.

It is found in the cell membrane. It carries out the reaction H2 + 2 oxidized [2Fe-2S]-[ferredoxin] = 2 reduced [2Fe-2S]-[ferredoxin] + 2 H(+). With respect to regulation, inhibited by 0.1 mM Cu(2+). Functionally, probable subunit of a hydrogen-evolving hydrogenase that utilizes protons both as a substrate for hydrogen production and proton translocation. Acts by coupling the redox reaction via ferredoxin and iron-sulfur (Fe-S) clusters to proton translocation across the membrane, thereby conserving the redox energy in a proton gradient. In Pyrococcus furiosus (strain ATCC 43587 / DSM 3638 / JCM 8422 / Vc1), this protein is Probable membrane-bound hydrogenase subunit mbhJ.